We begin with the raw amino-acid sequence, 195 residues long: Probable chorismate pyruvate-lyase (195 aa).

Substrate contacts are provided by arginine 79, leucine 117, and glutamate 180.

The protein belongs to the UbiC family.

It localises to the cytoplasm. It carries out the reaction chorismate = 4-hydroxybenzoate + pyruvate. It functions in the pathway cofactor biosynthesis; ubiquinone biosynthesis. Removes the pyruvyl group from chorismate, with concomitant aromatization of the ring, to provide 4-hydroxybenzoate (4HB) for the ubiquinone pathway. This chain is Probable chorismate pyruvate-lyase, found in Ralstonia nicotianae (strain ATCC BAA-1114 / GMI1000) (Ralstonia solanacearum).